The primary structure comprises 116 residues: Large ribosomal subunit protein bL20 (116 aa).

It belongs to the bacterial ribosomal protein bL20 family.

In terms of biological role, binds directly to 23S ribosomal RNA and is necessary for the in vitro assembly process of the 50S ribosomal subunit. It is not involved in the protein synthesizing functions of that subunit. In Phocaeicola vulgatus (strain ATCC 8482 / DSM 1447 / JCM 5826 / CCUG 4940 / NBRC 14291 / NCTC 11154) (Bacteroides vulgatus), this protein is Large ribosomal subunit protein bL20.